Reading from the N-terminus, the 192-residue chain is uncharacterized protein (192 aa).

This is an uncharacterized protein from Nostoc sp. (strain PCC 7120 / SAG 25.82 / UTEX 2576).